Here is a 1004-residue protein sequence, read N- to C-terminus: Sal-like protein 2 (1004 aa).

Disordered regions lie at residues 1 to 33 (MSRR…EDHP), 51 to 122 (AHQN…EESS), 137 to 177 (GGGL…SGHL), 220 to 270 (PASP…EPPK), and 285 to 307 (PFSV…ALPG). A C2H2-type 1; atypical zinc finger spans residues 34 to 56 (QVCAKCCAQFSDPTEFLAHQNSC). The segment covering 71 to 81 (NPSNSSASSAP) has biased composition (low complexity). Basic and acidic residues predominate over residues 83 to 98 (PEGHSRSQVMDTEHSN). The segment covering 99 to 110 (PPDSGSSGAPDP) has biased composition (low complexity). Residues 151–171 (PLPPESTPAPPPPPPPPPPPG) are compositionally biased toward pro residues. A Phosphoserine modification is found at S243. C2H2-type zinc fingers lie at residues 372 to 394 (HKCR…LRSH), 400 to 422 (YKCN…FHRH), 629 to 651 (NQCV…YGQH), 657 to 679 (FKCK…FVGH), and 689 to 711 (NSCP…VRMH). Residues 712–910 (LGGQIPNGGS…PGESSGRKAC (199 aa)) are disordered. Over residues 731 to 742 (QENSSEQSTASG) the composition is skewed to polar residues. Positions 756 to 779 (PEEEMSEEEEEDEEEEEDVTDEDS) are enriched in acidic residues. A phosphoserine mark is found at S794, S799, and S803. The span at 800-809 (EEVSGAEEEV) shows a compositional bias: acidic residues. The segment covering 810–819 (ATSVAAPTTV) has biased composition (low complexity). Residues 820–829 (KEMDSNEKAP) show a composition bias toward basic and acidic residues. A compositionally biased stretch (pro residues) spans 832–841 (TLPPPPPPPD). The span at 896 to 910 (AMKKDPGESSGRKAC) shows a compositional bias: basic and acidic residues. K908 is covalently cross-linked (Glycyl lysine isopeptide (Lys-Gly) (interchain with G-Cter in ubiquitin)). 2 consecutive C2H2-type zinc fingers follow at residues 908-930 (KACE…QKTH) and 937-961 (FTCV…LAHH).

It belongs to the sal C2H2-type zinc-finger protein family. Expressed throughout embryonic development. In adult predominantly in brain.

It localises to the nucleus. Probable transcription factor that plays a role in eye development before, during, and after optic fissure closure. The polypeptide is Sal-like protein 2 (Sall2) (Mus musculus (Mouse)).